We begin with the raw amino-acid sequence, 210 residues long: Small ribosomal subunit protein uS4 (210 aa).

Residues glycine 100–lysine 160 enclose the S4 RNA-binding domain.

Belongs to the universal ribosomal protein uS4 family. In terms of assembly, part of the 30S ribosomal subunit. Contacts protein S5. The interaction surface between S4 and S5 is involved in control of translational fidelity.

Its function is as follows. One of the primary rRNA binding proteins, it binds directly to 16S rRNA where it nucleates assembly of the body of the 30S subunit. With S5 and S12 plays an important role in translational accuracy. The sequence is that of Small ribosomal subunit protein uS4 from Alcanivorax borkumensis (strain ATCC 700651 / DSM 11573 / NCIMB 13689 / SK2).